The following is a 257-amino-acid chain: NH(3)-dependent NAD(+) synthetase (257 aa).

32–39 (GLSGGVDS) is an ATP binding site. D38 is a binding site for Mg(2+). Residue R113 coordinates deamido-NAD(+). An ATP-binding site is contributed by T133. Position 138 (E138) interacts with Mg(2+). ATP-binding residues include K162 and S184.

Belongs to the NAD synthetase family. As to quaternary structure, homodimer.

The enzyme catalyses deamido-NAD(+) + NH4(+) + ATP = AMP + diphosphate + NAD(+) + H(+). It participates in cofactor biosynthesis; NAD(+) biosynthesis; NAD(+) from deamido-NAD(+) (ammonia route): step 1/1. Its function is as follows. Catalyzes the ATP-dependent amidation of deamido-NAD to form NAD. Uses ammonia as a nitrogen source. This is NH(3)-dependent NAD(+) synthetase from Wolinella succinogenes (strain ATCC 29543 / DSM 1740 / CCUG 13145 / JCM 31913 / LMG 7466 / NCTC 11488 / FDC 602W) (Vibrio succinogenes).